A 207-amino-acid polypeptide reads, in one-letter code: Thiamine-phosphate synthase (207 aa).

4-amino-2-methyl-5-(diphosphooxymethyl)pyrimidine is bound by residues 35-39 (QYRDK) and N67. The Mg(2+) site is built by D68 and D86. T105 contacts 4-amino-2-methyl-5-(diphosphooxymethyl)pyrimidine. 2-[(2R,5Z)-2-carboxy-4-methylthiazol-5(2H)-ylidene]ethyl phosphate is bound at residue 132–134 (SVT). Position 135 (K135) interacts with 4-amino-2-methyl-5-(diphosphooxymethyl)pyrimidine. G162 contributes to the 2-[(2R,5Z)-2-carboxy-4-methylthiazol-5(2H)-ylidene]ethyl phosphate binding site.

The protein belongs to the thiamine-phosphate synthase family. Requires Mg(2+) as cofactor.

The enzyme catalyses 2-[(2R,5Z)-2-carboxy-4-methylthiazol-5(2H)-ylidene]ethyl phosphate + 4-amino-2-methyl-5-(diphosphooxymethyl)pyrimidine + 2 H(+) = thiamine phosphate + CO2 + diphosphate. The catalysed reaction is 2-(2-carboxy-4-methylthiazol-5-yl)ethyl phosphate + 4-amino-2-methyl-5-(diphosphooxymethyl)pyrimidine + 2 H(+) = thiamine phosphate + CO2 + diphosphate. It carries out the reaction 4-methyl-5-(2-phosphooxyethyl)-thiazole + 4-amino-2-methyl-5-(diphosphooxymethyl)pyrimidine + H(+) = thiamine phosphate + diphosphate. It functions in the pathway cofactor biosynthesis; thiamine diphosphate biosynthesis; thiamine phosphate from 4-amino-2-methyl-5-diphosphomethylpyrimidine and 4-methyl-5-(2-phosphoethyl)-thiazole: step 1/1. Functionally, condenses 4-methyl-5-(beta-hydroxyethyl)thiazole monophosphate (THZ-P) and 2-methyl-4-amino-5-hydroxymethyl pyrimidine pyrophosphate (HMP-PP) to form thiamine monophosphate (TMP). This chain is Thiamine-phosphate synthase, found in Pseudomonas putida (strain ATCC 47054 / DSM 6125 / CFBP 8728 / NCIMB 11950 / KT2440).